We begin with the raw amino-acid sequence, 615 residues long: Elongation factor 4 (615 aa).

The 187-residue stretch at 14–200 (ARIRNFCIIA…KVVELIPAPT (187 aa)) folds into the tr-type G domain. Residues 26 to 31 (DHGKST) and 147 to 150 (NKID) contribute to the GTP site.

It belongs to the TRAFAC class translation factor GTPase superfamily. Classic translation factor GTPase family. LepA subfamily.

Its subcellular location is the cell membrane. The enzyme catalyses GTP + H2O = GDP + phosphate + H(+). Required for accurate and efficient protein synthesis under certain stress conditions. May act as a fidelity factor of the translation reaction, by catalyzing a one-codon backward translocation of tRNAs on improperly translocated ribosomes. Back-translocation proceeds from a post-translocation (POST) complex to a pre-translocation (PRE) complex, thus giving elongation factor G a second chance to translocate the tRNAs correctly. Binds to ribosomes in a GTP-dependent manner. The protein is Elongation factor 4 of Corynebacterium glutamicum (strain ATCC 13032 / DSM 20300 / JCM 1318 / BCRC 11384 / CCUG 27702 / LMG 3730 / NBRC 12168 / NCIMB 10025 / NRRL B-2784 / 534).